The sequence spans 261 residues: Indole-3-glycerol phosphate synthase (261 aa).

This sequence belongs to the TrpC family.

It carries out the reaction 1-(2-carboxyphenylamino)-1-deoxy-D-ribulose 5-phosphate + H(+) = (1S,2R)-1-C-(indol-3-yl)glycerol 3-phosphate + CO2 + H2O. It participates in amino-acid biosynthesis; L-tryptophan biosynthesis; L-tryptophan from chorismate: step 4/5. The polypeptide is Indole-3-glycerol phosphate synthase (Campylobacter curvus (strain 525.92)).